A 291-amino-acid polypeptide reads, in one-letter code: 33 kDa chaperonin (291 aa).

Intrachain disulfides connect C229-C231 and C262-C265.

The protein belongs to the HSP33 family. Under oxidizing conditions two disulfide bonds are formed involving the reactive cysteines. Under reducing conditions zinc is bound to the reactive cysteines and the protein is inactive.

Its subcellular location is the cytoplasm. Its function is as follows. Redox regulated molecular chaperone. Protects both thermally unfolding and oxidatively damaged proteins from irreversible aggregation. Plays an important role in the bacterial defense system toward oxidative stress. This Aliivibrio fischeri (strain ATCC 700601 / ES114) (Vibrio fischeri) protein is 33 kDa chaperonin.